The following is a 199-amino-acid chain: dTTP/UTP pyrophosphatase (199 aa).

The Proton acceptor role is filled by Asp79.

This sequence belongs to the Maf family. YhdE subfamily. A divalent metal cation serves as cofactor.

Its subcellular location is the cytoplasm. It catalyses the reaction dTTP + H2O = dTMP + diphosphate + H(+). It carries out the reaction UTP + H2O = UMP + diphosphate + H(+). Functionally, nucleoside triphosphate pyrophosphatase that hydrolyzes dTTP and UTP. May have a dual role in cell division arrest and in preventing the incorporation of modified nucleotides into cellular nucleic acids. The sequence is that of dTTP/UTP pyrophosphatase from Porphyromonas gingivalis (strain ATCC 33277 / DSM 20709 / CIP 103683 / JCM 12257 / NCTC 11834 / 2561).